The primary structure comprises 153 residues: Small ribosomal subunit protein uS5 (153 aa).

Residues 15 to 78 form the S5 DRBM domain; the sequence is FQEVVVNVGR…DDAFKNLIHV (64 aa).

It belongs to the universal ribosomal protein uS5 family. In terms of assembly, part of the 30S ribosomal subunit. Contacts proteins S4 and S8.

Its function is as follows. With S4 and S12 plays an important role in translational accuracy. Located at the back of the 30S subunit body where it stabilizes the conformation of the head with respect to the body. In Helicobacter acinonychis (strain Sheeba), this protein is Small ribosomal subunit protein uS5.